A 652-amino-acid chain; its full sequence is MPDRLVPATLARRDDGILVSPEYGELPRDASHARAHANRMLAGTGLPAHWRGRRTFTIVETGFGTGSRFLATWAAWRDDPARCERLHFVAIEPHPFARDDLRRAVSNFVADTTISENADALLDAWPMHVPGLHRLEFDAGRVVLTLAFGDAHDMLQRLVARADAFYLGNLASAAHGDVLSADVIRALARIAADGATYATHSHDDAVKHALEQTGFTSRDVEDGAGEPALRVGEYAPRWRMRRHEPPRALPVASREAIVIGAGLAGCAVVERLAARGWNITLIERHEQIASEASGNPAGVFHPLMTRDDNVASRLTRSGFLHALARWRALEEAGHAFARSTRGMIHLAESADDFARMRDAFDALGAPSDYVSLLDTDAARAHLNLPVAHGGLLFPHGGAVWPAGVCAAQIAAAGERVKLLAGTEVARLERDRDMWRAVDAASATLAEAPVVVLANAGDAVRLAGLRHVALQPVRGQLTLLPPGSTAPLPCPTIGDGYAVPLDDGTLLIGATFEPDDVDRTMRTAGHIENLERVRHLLPGLIGELPDVDTLRGRVAFRWVVADRVPVIGPLADEAQGVANARALSGAKARDLPRAAGLYGAFGYGSRGLVWAALGAELIASQLEGEPLPLERELVDAVDPARFLIRALRGRQIG.

The interval 1 to 235 is tRNA (mnm(5)s(2)U34)-methyltransferase; sequence MPDRLVPATL…EPALRVGEYA (235 aa). Residues 259 to 652 form an FAD-dependent cmnm(5)s(2)U34 oxidoreductase region; it reads IGAGLAGCAV…IRALRGRQIG (394 aa).

The protein in the N-terminal section; belongs to the methyltransferase superfamily. tRNA (mnm(5)s(2)U34)-methyltransferase family. In the C-terminal section; belongs to the DAO family. Requires FAD as cofactor.

The protein resides in the cytoplasm. It carries out the reaction 5-aminomethyl-2-thiouridine(34) in tRNA + S-adenosyl-L-methionine = 5-methylaminomethyl-2-thiouridine(34) in tRNA + S-adenosyl-L-homocysteine + H(+). Catalyzes the last two steps in the biosynthesis of 5-methylaminomethyl-2-thiouridine (mnm(5)s(2)U) at the wobble position (U34) in tRNA. Catalyzes the FAD-dependent demodification of cmnm(5)s(2)U34 to nm(5)s(2)U34, followed by the transfer of a methyl group from S-adenosyl-L-methionine to nm(5)s(2)U34, to form mnm(5)s(2)U34. The sequence is that of tRNA 5-methylaminomethyl-2-thiouridine biosynthesis bifunctional protein MnmC from Burkholderia ambifaria (strain MC40-6).